A 595-amino-acid chain; its full sequence is Indole-3-acetic acid-amido synthetase GH3.15 (595 aa).

Residues serine 97–serine 98, threonine 302, and phenylalanine 325–glutamate 330 each bind ATP. Positions 325 and 332 each coordinate substrate. Positions 348 and 408 each coordinate ATP.

It belongs to the IAA-amido conjugating enzyme family. Expressed in seedlings, roots, and parts of the siliques.

The catalysed reaction is (indol-3-yl)butanoate + L-cysteine + ATP = (indol-3-yl)butanoyl-L-cysteine + AMP + diphosphate + H(+). It catalyses the reaction (indol-3-yl)butanoate + L-glutamine + ATP = (indol-3-yl)butanoyl-L-glutamine + AMP + diphosphate + H(+). It carries out the reaction 4-(2,4-dichlorophenoxy)butanoate + L-glutamine + ATP = 4-(2,4-dichlorophenoxy)butanoyl-L-glutamine + AMP + diphosphate + H(+). In terms of biological role, indole-3-acetic acid-amido (IAA) synthetase that catalyzes the conjugation of amino acids to auxin specifically using the auxin precursor indole-3-butyric acid (IBA) and glutamine and, possibly, cysteine as substrates. Displays high catalytic activity with the auxinic phenoxyalkanoic acid herbicides 4-(2,4-dichlorophenoxy)butyric acid (2,4-DB) and to some extent 2,4-dichlorophenoxylacetic acid (2,4-D) as substrates, thus conferring resistance to herbicides. The chain is Indole-3-acetic acid-amido synthetase GH3.15 from Arabidopsis thaliana (Mouse-ear cress).